We begin with the raw amino-acid sequence, 393 residues long: Lysophosphatidic acid receptor 1 (393 aa).

At 1–50 (MAAASTSSPVVSQPQFTAMNEPQCFYNESIAFFYNRSGKYLATEWNTVSK) the chain is on the extracellular side. 2 disulfide bridges follow: Cys-24/Cys-190 and Cys-188/Cys-195. 2 N-linked (GlcNAc...) asparagine glycosylation sites follow: Asn-27 and Asn-35. Lys-39 is a binding site for a 1-acyl-sn-glycero-3-phosphate. A helical transmembrane segment spans residues 51–75 (LVMGLGITVCIFIMLANLLVMVAIY). Residues 76 to 83 (VNRRFHFP) are Cytoplasmic-facing. Residues 84–107 (IYYLMANLAAADFFAGLAYFYLMF) traverse the membrane as a helical segment. Residues 108 to 121 (NTGPNTRRLTVSTW) are Extracellular-facing. The chain crosses the membrane as a helical span at residues 122–144 (LLRQGLIDTTVTASVANLLAIAI). 124-129 (RQGLID) is a binding site for a 1-acyl-sn-glycero-3-phosphate. The Cytoplasmic segment spans residues 145 to 163 (ERHITVFRMQLHTRMSNRR). A helical transmembrane segment spans residues 164-184 (VVVVIVVIWTMAIVMGAIPSV). At 185–204 (GWNCICDIENCSNMAPLYSD) the chain is on the extracellular side. The helical transmembrane segment at 205-225 (SYLVFWAIFNLVTFVVMVVLY) threads the bilayer. Residue Trp-210 participates in a 1-acyl-sn-glycero-3-phosphate binding. At 226–255 (AHIFGYVRQRTMRMSRHSSGPRRNRDTMMS) the chain is on the cytoplasmic side. The chain crosses the membrane as a helical span at residues 256–280 (LLKTVVIVLGAFIICWTPGLVLLLL). The Extracellular portion of the chain corresponds to 281–294 (DVCCPQCDVLAYEK). The cysteines at positions 284 and 287 are disulfide-linked. Residues 295-315 (FFLLLAEFNSAMNPIIYSYRD) traverse the membrane as a helical segment. The Cytoplasmic segment spans residues 316–393 (KEMSATFRQI…PPERPGQGRV (78 aa)). At Ser-341 the chain carries Phosphoserine. Phosphothreonine is present on Thr-351. Residues 369–381 (KMRGGHHLLRDEQ) show a composition bias toward basic and acidic residues. The tract at residues 369-393 (KMRGGHHLLRDEQPPPPERPGQGRV) is disordered.

It belongs to the G-protein coupled receptor 1 family. In terms of assembly, interacts with RALA and GRK2. Interacts with GNAQ and GNA13. Interacts with CD14; the interaction is enhanced by exposure to bacterial lipopolysaccharide (LPS). N-glycosylated. As to expression, detected in brain cortex and in pituitary pars tuberalis.

It localises to the cell surface. It is found in the cell membrane. Its subcellular location is the endosome. Its function is as follows. Receptor for lysophosphatidic acid (LPA). Plays a role in the reorganization of the actin cytoskeleton, cell migration, differentiation and proliferation, and thereby contributes to the responses to tissue damage and infectious agents. Activates downstream signaling cascades via the G(i)/G(o), G(12)/G(13), and G(q) families of heteromeric G proteins. Signaling inhibits adenylyl cyclase activity and decreases cellular cAMP levels. Signaling triggers an increase of cytoplasmic Ca(2+) levels. Activates RALA; this leads to the activation of phospholipase C (PLC) and the formation of inositol 1,4,5-trisphosphate. Signaling mediates activation of down-stream MAP kinases. Contributes to the regulation of cell shape. Promotes Rho-dependent reorganization of the actin cytoskeleton in neuronal cells and neurite retraction. Promotes the activation of Rho and the formation of actin stress fibers. Promotes formation of lamellipodia at the leading edge of migrating cells via activation of RAC1. Through its function as LPA receptor, plays a role in chemotaxis and cell migration, including responses to injury and wounding. Plays a role in triggering inflammation in response to bacterial lipopolysaccharide (LPS) via its interaction with CD14. Promotes cell proliferation in response to LPA. Inhibits the intracellular ciliogenesis pathway in response to LPA and through AKT1 activation. Required for normal skeleton development. May play a role in osteoblast differentiation. Required for normal brain development. Required for normal proliferation, survival and maturation of newly formed neurons in the adult dentate gyrus. Plays a role in pain perception and in the initiation of neuropathic pain. This is Lysophosphatidic acid receptor 1 (LPAR1) from Ovis aries (Sheep).